The primary structure comprises 496 residues: Squalene epoxidase ERG1 (496 aa).

Residues 1-16 (MSAVNVAPELINADNT) are Cytoplasmic-facing. Residues 17-37 (ITYDAIVIGAGVIGPCVATGL) traverse the membrane as a helical segment. Residues 28–29 (VI), 48–49 (ER), arginine 56, and arginine 158 each bind FAD. Residues 38 to 474 (ARKGKKVLIV…FLGLPMALLE (437 aa)) are Lumenal-facing. Residues lysine 284, lysine 289, and lysine 311 each participate in a glycyl lysine isopeptide (Lys-Gly) (interchain with G-Cter in ubiquitin) cross-link. 2 residues coordinate FAD: aspartate 335 and methionine 348. A helical membrane pass occupies residues 475–495 (GIMILITAIRVFTPFLFGELI). Position 496 (glycine 496) is a topological domain, cytoplasmic.

This sequence belongs to the squalene monooxygenase family. As to quaternary structure, interacts with ERG28. It depends on FAD as a cofactor.

The protein localises to the microsome membrane. It is found in the endoplasmic reticulum membrane. It localises to the lipid droplet. It carries out the reaction squalene + reduced [NADPH--hemoprotein reductase] + O2 = (S)-2,3-epoxysqualene + oxidized [NADPH--hemoprotein reductase] + H2O + H(+). It participates in terpene metabolism; lanosterol biosynthesis; lanosterol from farnesyl diphosphate: step 2/3. Inhibited by the allylamine antimycotic drugs. Its function is as follows. Squalene epoxidase; part of the third module of ergosterol biosynthesis pathway that includes the late steps of the pathway. ERG1 catalyzes the epoxidation of squalene into 2,3-epoxysqualene. The third module or late pathway involves the ergosterol synthesis itself through consecutive reactions that mainly occur in the endoplasmic reticulum (ER) membrane. Firstly, the squalene synthase ERG9 catalyzes the condensation of 2 farnesyl pyrophosphate moieties to form squalene, which is the precursor of all steroids. Squalene synthase is crucial for balancing the incorporation of farnesyl diphosphate (FPP) into sterol and nonsterol isoprene synthesis. Secondly, the squalene epoxidase ERG1 catalyzes the stereospecific oxidation of squalene to (S)-2,3-epoxysqualene, which is considered to be a rate-limiting enzyme in steroid biosynthesis. Then, the lanosterol synthase ERG7 catalyzes the cyclization of (S)-2,3 oxidosqualene to lanosterol, a reaction that forms the sterol core. In the next steps, lanosterol is transformed to zymosterol through a complex process involving various demethylation, reduction and desaturation reactions. The lanosterol 14-alpha-demethylase ERG11 (also known as CYP51) catalyzes C14-demethylation of lanosterol to produce 4,4'-dimethyl cholesta-8,14,24-triene-3-beta-ol, which is critical for ergosterol biosynthesis. The C-14 reductase ERG24 reduces the C14=C15 double bond of 4,4-dimethyl-cholesta-8,14,24-trienol to produce 4,4-dimethyl-cholesta-8,24-dienol. 4,4-dimethyl-cholesta-8,24-dienol is substrate of the C-4 demethylation complex ERG25-ERG26-ERG27 in which ERG25 catalyzes the three-step monooxygenation required for the demethylation of 4,4-dimethyl and 4alpha-methylsterols, ERG26 catalyzes the oxidative decarboxylation that results in a reduction of the 3-beta-hydroxy group at the C-3 carbon to an oxo group, and ERG27 is responsible for the reduction of the keto group on the C-3. ERG28 has a role as a scaffold to help anchor ERG25, ERG26 and ERG27 to the endoplasmic reticulum and ERG29 regulates the activity of the iron-containing C4-methylsterol oxidase ERG25. Then, the sterol 24-C-methyltransferase ERG6 catalyzes the methyl transfer from S-adenosyl-methionine to the C-24 of zymosterol to form fecosterol. The C-8 sterol isomerase ERG2 catalyzes the reaction which results in unsaturation at C-7 in the B ring of sterols and thus converts fecosterol to episterol. The sterol-C5-desaturase ERG3 then catalyzes the introduction of a C-5 double bond in the B ring to produce 5-dehydroepisterol. The C-22 sterol desaturase ERG5 further converts 5-dehydroepisterol into ergosta-5,7,22,24(28)-tetraen-3beta-ol by forming the C-22(23) double bond in the sterol side chain. Finally, ergosta-5,7,22,24(28)-tetraen-3beta-ol is substrate of the C-24(28) sterol reductase ERG4 to produce ergosterol. The sequence is that of Squalene epoxidase ERG1 from Saccharomyces cerevisiae (strain ATCC 204508 / S288c) (Baker's yeast).